We begin with the raw amino-acid sequence, 366 residues long: DNA-directed RNA polymerase subunit alpha (366 aa).

Positions 1–233 (MVREKVRVST…DLFLPFLHAE (233 aa)) are alpha N-terminal domain (alpha-NTD). Residues 264-366 (KNEIALKSIF…KDEMGFESLE (103 aa)) are alpha C-terminal domain (alpha-CTD).

This sequence belongs to the RNA polymerase alpha chain family. In plastids the minimal PEP RNA polymerase catalytic core is composed of four subunits: alpha, beta, beta', and beta''. When a (nuclear-encoded) sigma factor is associated with the core the holoenzyme is formed, which can initiate transcription.

The protein resides in the plastid. Its subcellular location is the chloroplast. It carries out the reaction RNA(n) + a ribonucleoside 5'-triphosphate = RNA(n+1) + diphosphate. DNA-dependent RNA polymerase catalyzes the transcription of DNA into RNA using the four ribonucleoside triphosphates as substrates. This chain is DNA-directed RNA polymerase subunit alpha, found in Oenothera elata subsp. hookeri (Hooker's evening primrose).